The primary structure comprises 288 residues: ATP synthase gamma chain (288 aa).

The protein belongs to the ATPase gamma chain family. F-type ATPases have 2 components, CF(1) - the catalytic core - and CF(0) - the membrane proton channel. CF(1) has five subunits: alpha(3), beta(3), gamma(1), delta(1), epsilon(1). CF(0) has three main subunits: a, b and c.

Its subcellular location is the cell membrane. Produces ATP from ADP in the presence of a proton gradient across the membrane. The gamma chain is believed to be important in regulating ATPase activity and the flow of protons through the CF(0) complex. This Macrococcus caseolyticus (strain JCSC5402) (Macrococcoides caseolyticum) protein is ATP synthase gamma chain.